The sequence spans 164 residues: uncharacterized protein (164 aa).

Residues 1 to 60 (MERSASVGVNDGRFGGNQFYSPSFSSSSSSSSMRHVNYSCGSCGYELNLSSTNRITSTIG) constitute a chloroplast transit peptide.

It localises to the plastid. The protein localises to the chloroplast. This is an uncharacterized protein from Arabidopsis thaliana (Mouse-ear cress).